The sequence spans 395 residues: Beta-1,4-galactosyltransferase 3 (395 aa).

Topologically, residues 1–10 (MLRRLLERPC) are cytoplasmic. Residues 11–31 (TLALLVGSQLAVMMYLSLGGF) traverse the membrane as a helical; Signal-anchor for type II membrane protein segment. Over 32 to 395 (RSLSALFGRD…ANHTAPHGSH (364 aa)) the chain is Lumenal. Asn-57 is a glycosylation site (N-linked (GlcNAc...) asparagine). Cys-79 and Cys-121 are joined by a disulfide. 132–136 (PHRAR) lines the UDP-alpha-D-galactose pocket. Asn-168 carries N-linked (GlcNAc...) asparagine glycosylation. UDP-alpha-D-galactose-binding positions include 171 to 173 (FNR), 198 to 199 (VD), Tyr-228, and Trp-260. Cysteines 192 and 211 form a disulfide. Asp-199 serves as a coordination point for Mn(2+). 262–265 (GEDD) is a binding site for N-acetyl-D-glucosamine. His-293 contacts Mn(2+). 293 to 295 (HRG) is a UDP-alpha-D-galactose binding site. Arg-305 contributes to the N-acetyl-D-glucosamine binding site. N-linked (GlcNAc...) asparagine glycans are attached at residues Asn-339 and Asn-387. Residues 341–395 (TADIGTDPRGPRAPSGPRYPPGSSQAFRQEMLQRRPPARPGPLPTANHTAPHGSH) are disordered.

The protein belongs to the glycosyltransferase 7 family. Mn(2+) serves as cofactor.

Its subcellular location is the golgi apparatus. It is found in the golgi stack membrane. It catalyses the reaction an N-acetyl-beta-D-glucosaminyl derivative + UDP-alpha-D-galactose = a beta-D-galactosyl-(1-&gt;4)-N-acetyl-beta-D-glucosaminyl derivative + UDP + H(+). The catalysed reaction is N-acetyl-D-glucosamine + UDP-alpha-D-galactose = beta-D-galactosyl-(1-&gt;4)-N-acetyl-D-glucosamine + UDP + H(+). The enzyme catalyses a beta-D-GlcNAc-(1-&gt;3)-beta-D-Gal-(1-&gt;4)-beta-D-Glc-(1&lt;-&gt;1)-Cer(d18:1(4E)) + UDP-alpha-D-galactose = a neolactoside nLc4Cer(d18:1(4E)) + UDP + H(+). It carries out the reaction a beta-D-glucosylceramide + UDP-alpha-D-galactose = a beta-D-galactosyl-(1-&gt;4)-beta-D-glucosyl-(1&lt;-&gt;1)-ceramide + UDP + H(+). It catalyses the reaction a neolactoside IV(3)-beta-GlcNAc-nLc4Cer + UDP-alpha-D-galactose = a neolactoside nLc6Cer + UDP + H(+). It functions in the pathway protein modification; protein glycosylation. Functionally, responsible for the synthesis of complex-type N-linked oligosaccharides in many glycoproteins as well as the carbohydrate moieties of glycolipids. This is Beta-1,4-galactosyltransferase 3 from Rattus norvegicus (Rat).